Consider the following 545-residue polypeptide: ATP synthase subunit alpha (545 aa).

An ATP-binding site is contributed by 172–179 (GDRKTGKT).

The protein belongs to the ATPase alpha/beta chains family. In terms of assembly, F-type ATPases have 2 components, CF(1) - the catalytic core - and CF(0) - the membrane proton channel. CF(1) has five subunits: alpha(3), beta(3), gamma(1), delta(1), epsilon(1). CF(0) has three main subunits: a(1), b(2) and c(9-12). The alpha and beta chains form an alternating ring which encloses part of the gamma chain. CF(1) is attached to CF(0) by a central stalk formed by the gamma and epsilon chains, while a peripheral stalk is formed by the delta and b chains.

The protein resides in the cell membrane. The catalysed reaction is ATP + H2O + 4 H(+)(in) = ADP + phosphate + 5 H(+)(out). Produces ATP from ADP in the presence of a proton gradient across the membrane. The alpha chain is a regulatory subunit. This chain is ATP synthase subunit alpha, found in Nocardia farcinica (strain IFM 10152).